We begin with the raw amino-acid sequence, 353 residues long: Galectin-9 (353 aa).

In terms of domain architecture, Galectin 1 spans 17-147; it reads FTGPIQGGLQ…CLKLSFITFQ (131 aa). A beta-D-galactoside-binding positions include Asn-47, His-60, Arg-64, Asn-74, and 81–87; that span reads WGPEERK. A disordered region spans residues 167–186; that stretch reads QFPRTPKGRKQKTQNFRPAH. The region spanning 225–353 is the Galectin 2 domain; sequence FYTPIPNGLY…GDIQLTHVQT (129 aa). Residues His-265, Arg-269, Thr-279, and 285–291 each bind a beta-D-galactoside; that span reads WGQEERS.

In terms of assembly, homodimer. In terms of tissue distribution, accentuated expression in liver and thymus of embryo, detected in embryonic heart, brain, lung, liver, and kidney. Highly expressed in adult thymus, small intestine, and liver, and to a lesser extent in lung, kidney, spleen, cardiac, and skeletal muscle. Barely detectable in brain and reticulocyte. Expressed in placenta, uterus and decidua during pregnancy. Expressed in CD4+ T-cells with higher levels in iTreg cells than other T-cell types and sustained high levels throughout iTreg cell differentiation (at protein level). Expressed in myeloid cells in lung. Constitutively expressed in microglia. Isoform 1 is expressed exclusively in the small intestine. Isoform 2 expression in decidua increases in pathological pregnancy from gestation day 7.5 to 13.5 and it is higher than in normal pregnancy. Isoform 3 expression in decidua is higher in normal pregnancy than in pathological pregnancy.

The protein localises to the cytoplasm. It is found in the nucleus. It localises to the secreted. Functionally, binds galactosides. Has high affinity for the Forssman pentasaccharide. Ligand for HAVCR2/TIM3. Binding to HAVCR2 induces T-helper type 1 lymphocyte (Th1) death. Also stimulates bactericidal activity in infected macrophages by causing macrophage activation and IL1B secretion which restricts intracellular bacterial growth. Ligand for P4HB; the interaction retains P4HB at the cell surface of Th2 T-helper cells, increasing disulfide reductase activity at the plasma membrane, altering the plasma membrane redox state and enhancing cell migration. Ligand for CD44; the interaction enhances binding of SMAD3 to the FOXP3 promoter, leading to up-regulation of FOXP3 expression and increased induced regulatory T (iTreg) cell stability and suppressive function. Promotes ability of mesenchymal stromal cells to suppress T-cell proliferation. Expands regulatory T-cells and induces cytotoxic T-cell apoptosis following virus infection. Activates ERK1/2 phosphorylation inducing cytokine (IL-6, IL-8, IL-12) and chemokine (CCL2) production in mast and dendritic cells. Inhibits degranulation and induces apoptosis of mast cells. Induces maturation and migration of dendritic cells. Inhibits natural killer (NK) cell function. Can transform NK cell phenotype from peripheral to decidual during pregnancy. Astrocyte derived galectin-9 enhances microglial TNF production. May play a role in thymocyte-epithelial interactions relevant to the biology of the thymus. May provide the molecular basis for urate flux across cell membranes, allowing urate that is formed during purine metabolism to efflux from cells and serving as an electrogenic transporter that plays an important role in renal and gastrointestinal urate excretion. Highly selective to the anion urate. In terms of biological role, acts as an eosinophil chemoattractant. It also inhibits angiogenesis. Suppresses IFNG production by natural killer cells. The sequence is that of Galectin-9 (Lgals9) from Mus musculus (Mouse).